The sequence spans 684 residues: MEENLISMREDHSFHVRYRMEASCLELALEGERLCKSGDCRAGVSFFEAAVQVGTEDLKTLSAIYSQLGNAYFYLHDYAKALEYHHHDLTLARTIGDQLGEAKASGNLGNTLKVLGNFDEAIVCCQRHLDISRELNDKVGEARALYNLGNVYHAKGKSFGCPGPQDVGEFPEEVRDALQAAVDFYEENLSLVTALGDRAAQGRAFGNLGNTHYLLGNFRDAVIAHEQRLLIAKEFGDKAAERRAYSNLGNAYIFLGEFETASEYYKKTLLLARQLKDRAVEAQSCYSLGNTYTLLQDYEKAIDYHLKHLAIAQELNDRIGEGRACWSLGNAYTALGNHDQAMHFAEKHLEISREVGDKSGELTARLNLSDLQMVLGLSYSTNNSIMSENTEIDSSLNGVRPKLGRRHSMENMELMKLTPEKVQNWNSEILAKQKPLIAKPSAKLLFVNRLKGKKYKTNSSTKVLQDASNSIDHRIPNSQRKISADTIGDEGFFDLLSRFQSNRMDDQRCCLQEKNCHTASTTTSSTPPKMMLKTSSVPVVSPNTDEFLDLLASSQSRRLDDQRASFSNLPGLRLTQNSQSVLSHLMTNDNKEADEDFFDILVKCQGSRLDDQRCAPPPATTKGPTVPDEDFFSLILRSQGKRMDEQRVLLQRDQNRDTDFGLKDFLQNNALLEFKNSGKKSADH.

The tract at residues 22-357 (ASCLELALEG…HLEISREVGD (336 aa)) is important for interaction with NUMA1; INSC and FRMPD1. TPR repeat units lie at residues 24–57 (CLELALEGERLCKSGDCRAGVSFFEAAVQVGTED), 62–95 (SAIYSQLGNAYFYLHDYAKALEYHHHDLTLARTI), 102–135 (AKASGNLGNTLKVLGNFDEAIVCCQRHLDISREL), 142–184 (ARAL…AVDF), 202–235 (GRAFGNLGNTHYLLGNFRDAVIAHEQRLLIAKEF), 242–275 (RRAYSNLGNAYIFLGEFETASEYYKKTLLLARQL), 282–315 (AQSCYSLGNTYTLLQDYEKAIDYHLKHLAIAQEL), and 322–355 (GRACWSLGNAYTALGNHDQAMHFAEKHLEISREV). Phosphoserine; by PKG is present on serine 132. Phosphoserine; by PKG is present on serine 352. Serine 408 and serine 483 each carry phosphoserine. Threonine 486 is modified (phosphothreonine). In terms of domain architecture, GoLoco 1 spans 489–511 (DEGFFDLLSRFQSNRMDDQRCCL). At serine 501 the chain carries Phosphoserine; by PKC. Phosphoserine is present on residues serine 541 and serine 565. GoLoco domains lie at 544-566 (TDEFLDLLASSQSRRLDDQRASF), 594-616 (DEDFFDILVKCQGSRLDDQRCAP), and 628-650 (DEDFFSLILRSQGKRMDEQRVLL). Serine 607 carries the post-translational modification Phosphoserine; by PKG. Arginine 608, arginine 613, arginine 642, and arginine 647 together coordinate GDP.

This sequence belongs to the GPSM family. As to quaternary structure, interacts with the dynein-dynactin complex; this interaction is inhibited in a PLK1-dependent manner. Part of a spindle orientation complex at least composed of GNAI1, GPSM2 and NUMA1. Interacts with LLGL2. Interacts (via TPR repeat region) with INSC/inscuteable. Interacts (via TPR repeat region) with NUMA1 (via C-terminus); this interaction is direct, inhibited in a PLK1-dependent manner, prevents the binding of NUMA1 with SPAG5 and promotes spindle pole organization. INSC and NUMA1 compete for the same binding site, but INSC has higher affinity and can displace NUMA1 (in vitro). Interacts with GNAI2. Interacts (via GoLoco domains) with the GDP-bound form of GNAI1 and GNAI3; has much lower affinity for the GTP-bound form. Interaction with GDP-bound GNAI3 strongly enhances the affinity for NUMA1. Interacts (via TPR repeat region) with FRMPD1. INSC and FRMPD1 compete for the same binding site, but INSC has higher affinity and can displace FRMPD1 (in vitro). Interacts (via TPR repeat region) with FRMPD4. Identified in a complex with INSC and F2RL2/Par3. Interacts with TASOR. Ubiquitously expressed.

It localises to the cytoplasm. It is found in the cell cortex. The protein localises to the cytoskeleton. Its subcellular location is the spindle pole. The protein resides in the lateral cell membrane. Functionally, plays an important role in mitotic spindle pole organization via its interaction with NUMA1. Required for cortical dynein-dynactin complex recruitment during metaphase. Plays a role in metaphase spindle orientation. Also plays an important role in asymmetric cell divisions. Has guanine nucleotide dissociation inhibitor (GDI) activity towards G(i) alpha proteins, such as GNAI1 and GNAI3, and thereby regulates their activity. The sequence is that of G-protein-signaling modulator 2 (GPSM2) from Homo sapiens (Human).